A 181-amino-acid chain; its full sequence is Cyclic AMP-dependent transcription factor ATF-3 (181 aa).

The tract at residues glutamate 73–lysine 97 is disordered. Residue lysine 78 forms a Glycyl lysine isopeptide (Lys-Gly) (interchain with G-Cter in SUMO2) linkage. Residues aspartate 86–histidine 149 form the bZIP domain. The basic motif stretch occupies residues arginine 88 to lysine 110. The interval leucine 114–leucine 142 is leucine-zipper. At threonine 162 the chain carries Phosphothreonine. Lysine 175 is covalently cross-linked (Glycyl lysine isopeptide (Lys-Gly) (interchain with G-Cter in SUMO2)).

It belongs to the bZIP family. ATF subfamily. Binds DNA as a homodimer or a heterodimer. Interacts with KAT5; promoting KAT5 autoacetylation and KAT5 deubiquitination by USP7.

It is found in the nucleus. This protein binds the cAMP response element (CRE) (consensus: 5'-GTGACGT[AC][AG]-3'), a sequence present in many viral and cellular promoters. Represses transcription from promoters with ATF sites. It may repress transcription by stabilizing the binding of inhibitory cofactors at the promoter. The protein is Cyclic AMP-dependent transcription factor ATF-3 of Mus musculus (Mouse).